We begin with the raw amino-acid sequence, 309 residues long: Homoserine O-succinyltransferase (309 aa).

Cysteine 142 functions as the Acyl-thioester intermediate in the catalytic mechanism. Residues lysine 163 and serine 192 each contribute to the substrate site. Histidine 235 functions as the Proton acceptor in the catalytic mechanism. Glutamate 237 is a catalytic residue. Residue arginine 249 participates in substrate binding.

It belongs to the MetA family. As to quaternary structure, homodimer.

Its subcellular location is the cytoplasm. It carries out the reaction L-homoserine + succinyl-CoA = O-succinyl-L-homoserine + CoA. The protein operates within amino-acid biosynthesis; L-methionine biosynthesis via de novo pathway; O-succinyl-L-homoserine from L-homoserine: step 1/1. Functionally, transfers a succinyl group from succinyl-CoA to L-homoserine, forming succinyl-L-homoserine. The sequence is that of Homoserine O-succinyltransferase from Escherichia coli (strain K12 / MC4100 / BW2952).